A 320-amino-acid chain; its full sequence is Biotin synthase (320 aa).

One can recognise a Radical SAM core domain in the interval 43–270 (GAVQKSQLLS…KSWVRLSAGR (228 aa)). [4Fe-4S] cluster-binding residues include Cys58, Cys62, and Cys65. [2Fe-2S] cluster contacts are provided by Cys102, Cys133, Cys193, and Arg265.

The protein belongs to the radical SAM superfamily. Biotin synthase family. In terms of assembly, homodimer. Requires [4Fe-4S] cluster as cofactor. It depends on [2Fe-2S] cluster as a cofactor.

It catalyses the reaction (4R,5S)-dethiobiotin + (sulfur carrier)-SH + 2 reduced [2Fe-2S]-[ferredoxin] + 2 S-adenosyl-L-methionine = (sulfur carrier)-H + biotin + 2 5'-deoxyadenosine + 2 L-methionine + 2 oxidized [2Fe-2S]-[ferredoxin]. The protein operates within cofactor biosynthesis; biotin biosynthesis; biotin from 7,8-diaminononanoate: step 2/2. Catalyzes the conversion of dethiobiotin (DTB) to biotin by the insertion of a sulfur atom into dethiobiotin via a radical-based mechanism. The chain is Biotin synthase from Hyphomonas neptunium (strain ATCC 15444).